The primary structure comprises 1198 residues: Tetratricopeptide repeat protein 17 (1198 aa).

A TPR 1 repeat occupies Phe-295–Phe-328. A coiled-coil region spans residues Cys-340–His-382. TPR repeat units follow at residues Trp-619–Gln-652 and Pro-689–Cys-722. Disordered stretches follow at residues Pro-771–Glu-825 and Lys-903–Asn-924. The span at Lys-903–Gly-914 shows a compositional bias: basic residues. TPR repeat units lie at residues Ser-1071–Gln-1105, Asp-1108–Phe-1141, and Ala-1142–Phe-1175.

The protein belongs to the TTC17 family. As to quaternary structure, interacts with CATIP. As to expression, expressed in germ cells as well as in somatic cells of the testis (at protein level). Ubiquitous.

The protein resides in the cytoplasm. Its subcellular location is the cell membrane. It localises to the cytoskeleton. In terms of biological role, plays a role in primary ciliogenesis by modulating actin polymerization. This chain is Tetratricopeptide repeat protein 17 (Ttc17), found in Rattus norvegicus (Rat).